A 94-amino-acid chain; its full sequence is Conotoxin Gla-MrII (94 aa).

Residues 1-25 (MFGHTSVSFLLLSIVALGMVATVIC) form the signal peptide. Residues Glu-30, Glu-34, Glu-37, Glu-40, and Glu-41 each carry the 4-carboxyglutamate modification. Positions 78–94 (STHMQKRFLRMPRDLAD) are excised as a propeptide.

This sequence belongs to the conotoxin I2 superfamily. Contains 4 disulfide bonds. Expressed by the venom duct.

It is found in the secreted. This chain is Conotoxin Gla-MrII, found in Conus marmoreus (Marble cone).